The sequence spans 452 residues: Probable 1,4-beta-D-glucan cellobiohydrolase A (452 aa).

The signal sequence occupies residues 1–17 (MHQRALLFSALAVAANA). The N-linked (GlcNAc...) asparagine glycan is linked to asparagine 81. The Nucleophile role is filled by glutamate 226. The active-site Proton donor is glutamate 231. Asparagine 284 is a glycosylation site (N-linked (GlcNAc...) asparagine). The segment at 405–431 (ADPSKPGVARGTCEHGAGDPENVESQH) is disordered.

Belongs to the glycosyl hydrolase 7 (cellulase C) family.

It is found in the secreted. It carries out the reaction Hydrolysis of (1-&gt;4)-beta-D-glucosidic linkages in cellulose and cellotetraose, releasing cellobiose from the non-reducing ends of the chains.. Functionally, the biological conversion of cellulose to glucose generally requires three types of hydrolytic enzymes: (1) Endoglucanases which cut internal beta-1,4-glucosidic bonds; (2) Exocellobiohydrolases that cut the disaccharide cellobiose from the non-reducing end of the cellulose polymer chain; (3) Beta-1,4-glucosidases which hydrolyze the cellobiose and other short cello-oligosaccharides to glucose. This chain is Probable 1,4-beta-D-glucan cellobiohydrolase A (cbhA), found in Aspergillus fumigatus (strain CBS 144.89 / FGSC A1163 / CEA10) (Neosartorya fumigata).